Consider the following 96-residue polypeptide: MANFVLKAEKREDLGTGASRRLRRAGKIPAVIYGGEKEAVSVLLDHDKVLHSTEDKEFFSSEITLDIDGKQEKVIIKALQRHPYKVKLIHADFMRV.

This sequence belongs to the bacterial ribosomal protein bL25 family. As to quaternary structure, part of the 50S ribosomal subunit; part of the 5S rRNA/L5/L18/L25 subcomplex. Contacts the 5S rRNA. Binds to the 5S rRNA independently of L5 and L18.

In terms of biological role, this is one of the proteins that binds to the 5S RNA in the ribosome where it forms part of the central protuberance. In Francisella tularensis subsp. holarctica (strain FTNF002-00 / FTA), this protein is Large ribosomal subunit protein bL25.